The chain runs to 179 residues: Inner membrane-spanning protein YciB (179 aa).

Transmembrane regions (helical) follow at residues 3–23 (FLFD…ADIY), 24–44 (TATA…WFRH), 49–69 (PMQW…LVLH), 76–96 (WKPT…VLVW), 121–141 (LAWA…AYQF), and 149–169 (FKLF…SVWL).

This sequence belongs to the YciB family.

It is found in the cell inner membrane. Functionally, plays a role in cell envelope biogenesis, maintenance of cell envelope integrity and membrane homeostasis. The polypeptide is Inner membrane-spanning protein YciB (Cupriavidus taiwanensis (strain DSM 17343 / BCRC 17206 / CCUG 44338 / CIP 107171 / LMG 19424 / R1) (Ralstonia taiwanensis (strain LMG 19424))).